Consider the following 397-residue polypeptide: Putative nickel insertion protein (397 aa).

This sequence belongs to the LarC family.

The polypeptide is Putative nickel insertion protein (Synechococcus sp. (strain JA-2-3B'a(2-13)) (Cyanobacteria bacterium Yellowstone B-Prime)).